The sequence spans 151 residues: Large ribosomal subunit protein uL16 (151 aa).

The protein belongs to the universal ribosomal protein uL16 family. In terms of assembly, part of the 50S ribosomal subunit.

In terms of biological role, binds 23S rRNA and is also seen to make contacts with the A and possibly P site tRNAs. The chain is Large ribosomal subunit protein uL16 from Chloroflexus aurantiacus (strain ATCC 29364 / DSM 637 / Y-400-fl).